The following is a 302-amino-acid chain: UPF0725 protein At1g23960 (302 aa).

Alanine 2 is modified (N-acetylalanine).

It belongs to the UPF0725 (EMB2204) family.

The sequence is that of UPF0725 protein At1g23960 from Arabidopsis thaliana (Mouse-ear cress).